Here is a 290-residue protein sequence, read N- to C-terminus: GTPase Era (290 aa).

Residues 2–144 (KVLKVGVLGP…AIILEEFKPQ (143 aa)) form the Era-type G domain. Positions 10-17 (GPTNAGKS) are G1. GTP is bound at residue 10–17 (GPTNAGKS). Residues 36–40 (NTTLL) are G2. A G3 region spans residues 58–61 (DVPG). A GTP-binding site is contributed by 58–62 (DVPGF). The tract at residues 97–100 (NKIE) is G4. Residues 121-123 (INK) form a G5 region. 122-125 (NKFH) contacts GTP. The 79-residue stretch at 201 to 279 (CKNEIPHIAR…FIDIFVKTEK (79 aa)) folds into the KH type-2 domain.

This sequence belongs to the TRAFAC class TrmE-Era-EngA-EngB-Septin-like GTPase superfamily. Era GTPase family. Monomer.

The protein localises to the cytoplasm. It localises to the cell membrane. An essential GTPase that binds both GDP and GTP, with rapid nucleotide exchange. Plays a role in 16S rRNA processing and 30S ribosomal subunit biogenesis and possibly also in cell cycle regulation and energy metabolism. The polypeptide is GTPase Era (Mycoplasma genitalium (strain ATCC 33530 / DSM 19775 / NCTC 10195 / G37) (Mycoplasmoides genitalium)).